The primary structure comprises 989 residues: Translation initiation factor IF-2 (989 aa).

Disordered regions lie at residues 28 to 60 (GVTKASEDDSLSETDKARLLDHLRKSHGSTDAD) and 97 to 397 (VRRD…DQNT). Basic and acidic residues-rich tracts occupy residues 40-60 (ETDKARLLDHLRKSHGSTDAD) and 122-178 (ELQR…EAAK). Residues 182 to 223 (AAAAEAAAREQQTQASKPAQAAQPAAAKAEPVAAKAAEPVVA) show a composition bias toward low complexity. Positions 231–280 (ERAAAERAAQREAAKKAEDAARQAAEKARAEQEEIAKRRAAAEAEARAIR) are enriched in basic and acidic residues. The segment covering 318-345 (RPAGEAPARPAAKKPAAAAPAATTTPSA) has biased composition (low complexity). Positions 374 to 387 (TSGGVDRGWRGGPK) are enriched in gly residues. The tr-type G domain maps to 489–658 (PRPPVVTVMG…LLQAEVLELK (170 aa)). A G1 region spans residues 498-505 (GHVDHGKT). 498–505 (GHVDHGKT) contacts GTP. The segment at 523 to 527 (GITQH) is G2. The tract at residues 544–547 (DTPG) is G3. GTP contacts are provided by residues 544 to 548 (DTPGH) and 598 to 601 (NKID). The G4 stretch occupies residues 598-601 (NKID). The interval 634–636 (SAK) is G5.

It belongs to the TRAFAC class translation factor GTPase superfamily. Classic translation factor GTPase family. IF-2 subfamily.

The protein resides in the cytoplasm. One of the essential components for the initiation of protein synthesis. Protects formylmethionyl-tRNA from spontaneous hydrolysis and promotes its binding to the 30S ribosomal subunits. Also involved in the hydrolysis of GTP during the formation of the 70S ribosomal complex. This is Translation initiation factor IF-2 from Paraburkholderia xenovorans (strain LB400).